The following is a 472-amino-acid chain: Uronate isomerase (472 aa).

The protein belongs to the metallo-dependent hydrolases superfamily. Uronate isomerase family.

It catalyses the reaction D-glucuronate = D-fructuronate. The catalysed reaction is aldehydo-D-galacturonate = keto-D-tagaturonate. Its pathway is carbohydrate metabolism; pentose and glucuronate interconversion. The protein is Uronate isomerase of Xanthomonas axonopodis pv. citri (strain 306).